We begin with the raw amino-acid sequence, 117 residues long: V-type sodium ATPase subunit F (117 aa).

The disordered stretch occupies residues 1–20; sequence MARILTRIKEAEENNQKKEE. Residues 7–20 show a composition bias toward basic and acidic residues; that stretch reads RIKEAEENNQKKEE.

Belongs to the V-ATPase G subunit family.

In terms of biological role, involved in ATP-driven sodium extrusion. In Enterococcus hirae (strain ATCC 9790 / DSM 20160 / JCM 8729 / LMG 6399 / NBRC 3181 / NCIMB 6459 / NCDO 1258 / NCTC 12367 / WDCM 00089 / R), this protein is V-type sodium ATPase subunit F (ntpF).